Consider the following 224-residue polypeptide: Peroxiredoxin-like 2A (224 aa).

The segment at 14–112 (MWSVGLGAVG…SKLGVPLYAV (99 aa)) is thioredoxin fold. Residue U85 is a non-standard amino acid, selenocysteine. Residue C88 is the Redox-active of the active site.

Belongs to the peroxiredoxin-like PRXL2 family. PRXL2A subfamily.

It is found in the cytoplasm. Its function is as follows. Involved in redox regulation of the cell. Acts as an antioxidant. Inhibits TNFSF11-induced NFKB1 and JUN activation and osteoclast differentiation. May affect bone resorption and help to maintain bone mass. This is Peroxiredoxin-like 2A (PRXL2A) from Gallus gallus (Chicken).